Consider the following 366-residue polypeptide: Cytochrome c mitochondrial import factor CYC2 (366 aa).

Residues 1–50 (MLWKNYVLSSSRITRRLHKSPRKSSFSKNFFITGCLLTVGAVSSYLTYRY) constitute a mitochondrion transit peptide. Positions 63 to 184 (SYFVKYKISH…RGPFIDYEFP (122 aa)) constitute an FAD-binding FR-type domain.

FAD serves as cofactor.

Its subcellular location is the mitochondrion inner membrane. Redox component that participates in c-type cytochrome biogenesis in the mitochondrial intermembrane space. May play a role in the reduction of heme prior to its ligation to apocytochrome c by cytochrome c heme lyase. Has oxidoreductase activity in vitro. The protein is Cytochrome c mitochondrial import factor CYC2 (CYC2) of Saccharomyces cerevisiae (strain ATCC 204508 / S288c) (Baker's yeast).